Consider the following 158-residue polypeptide: 6,7-dimethyl-8-ribityllumazine synthase (158 aa).

5-amino-6-(D-ribitylamino)uracil is bound by residues F22, 57-59 (AYE), and 84-86 (TVI). Residue 89-90 (GT) coordinates (2S)-2-hydroxy-3-oxobutyl phosphate. The active-site Proton donor is the H92. Position 117 (F117) interacts with 5-amino-6-(D-ribitylamino)uracil. Residue R131 participates in (2S)-2-hydroxy-3-oxobutyl phosphate binding.

It belongs to the DMRL synthase family. In terms of assembly, forms an icosahedral capsid composed of 60 subunits, arranged as a dodecamer of pentamers.

The enzyme catalyses (2S)-2-hydroxy-3-oxobutyl phosphate + 5-amino-6-(D-ribitylamino)uracil = 6,7-dimethyl-8-(1-D-ribityl)lumazine + phosphate + 2 H2O + H(+). It participates in cofactor biosynthesis; riboflavin biosynthesis; riboflavin from 2-hydroxy-3-oxobutyl phosphate and 5-amino-6-(D-ribitylamino)uracil: step 1/2. Catalyzes the formation of 6,7-dimethyl-8-ribityllumazine by condensation of 5-amino-6-(D-ribitylamino)uracil with 3,4-dihydroxy-2-butanone 4-phosphate. This is the penultimate step in the biosynthesis of riboflavin. The chain is 6,7-dimethyl-8-ribityllumazine synthase from Pectobacterium atrosepticum (strain SCRI 1043 / ATCC BAA-672) (Erwinia carotovora subsp. atroseptica).